Reading from the N-terminus, the 104-residue chain is Thioredoxin (104 aa).

In terms of domain architecture, Thioredoxin spans Ala2 to Leu104. Cys29 and Cys32 form a disulfide bridge.

It belongs to the thioredoxin family.

Functionally, component of the thioredoxin-thioredoxin reductase system. Participates in various redox reactions through the reversible oxidation of its active center dithiol to a disulfide and catalyzes dithiol-disulfide exchange reactions. This Staphylococcus haemolyticus (strain JCSC1435) protein is Thioredoxin (trxA).